Here is a 456-residue protein sequence, read N- to C-terminus: 26S proteasome non-ATPase regulatory subunit 12 (456 aa).

A2 carries the post-translational modification N-acetylalanine. A Glycyl lysine isopeptide (Lys-Gly) (interchain with G-Cter in SUMO1); alternate cross-link involves residue K92. K92 is covalently cross-linked (Glycyl lysine isopeptide (Lys-Gly) (interchain with G-Cter in SUMO2); alternate). In terms of domain architecture, PCI spans 242–420 (SICKHYRAIY…GVINFQRPKD (179 aa)). An N6-acetyllysine modification is found at K368.

The protein belongs to the proteasome subunit p55 family. In terms of assembly, component of the 19S proteasome regulatory particle complex. The 26S proteasome consists of a 20S core particle (CP) and two 19S regulatory subunits (RP). The regulatory particle is made of a lid composed of 9 subunits including PSMD12, a base containing 6 ATPases and few additional components. Interacts with ERCC6.

Component of the 26S proteasome, a multiprotein complex involved in the ATP-dependent degradation of ubiquitinated proteins. This complex plays a key role in the maintenance of protein homeostasis by removing misfolded or damaged proteins, which could impair cellular functions, and by removing proteins whose functions are no longer required. Therefore, the proteasome participates in numerous cellular processes, including cell cycle progression, apoptosis, or DNA damage repair. The chain is 26S proteasome non-ATPase regulatory subunit 12 (Psmd12) from Mus musculus (Mouse).